Here is a 71-residue protein sequence, read N- to C-terminus: UPF0435 protein BPUM_0734 (71 aa).

Belongs to the UPF0435 family.

The sequence is that of UPF0435 protein BPUM_0734 from Bacillus pumilus (strain SAFR-032).